A 211-amino-acid chain; its full sequence is Ribosome maturation factor RimM (211 aa).

Residues P111–L182 form the PRC barrel domain. Residues E184–R211 form a disordered region.

Belongs to the RimM family. In terms of assembly, binds ribosomal protein uS19.

It localises to the cytoplasm. An accessory protein needed during the final step in the assembly of 30S ribosomal subunit, possibly for assembly of the head region. Essential for efficient processing of 16S rRNA. May be needed both before and after RbfA during the maturation of 16S rRNA. It has affinity for free ribosomal 30S subunits but not for 70S ribosomes. The chain is Ribosome maturation factor RimM from Clavibacter sepedonicus (Clavibacter michiganensis subsp. sepedonicus).